A 463-amino-acid chain; its full sequence is UDP-N-acetylmuramoyl-L-alanyl-D-glutamate--2,6-diaminopimelate ligase (463 aa).

Thr-21 is a binding site for UDP-N-acetyl-alpha-D-muramoyl-L-alanyl-D-glutamate. ATP is bound at residue 94–100; that stretch reads GTNGKTT. Residues 137–138, Ser-164, Gln-170, and Arg-172 each bind UDP-N-acetyl-alpha-D-muramoyl-L-alanyl-D-glutamate; that span reads TT. Lys-204 bears the N6-carboxylysine mark. Meso-2,6-diaminopimelate is bound by residues Arg-358, 382-385, Gly-433, and Glu-437; that span reads DNPR. A Meso-diaminopimelate recognition motif motif is present at residues 382 to 385; sequence DNPR.

Belongs to the MurCDEF family. MurE subfamily. Requires Mg(2+) as cofactor. Carboxylation is probably crucial for Mg(2+) binding and, consequently, for the gamma-phosphate positioning of ATP.

It is found in the cytoplasm. The enzyme catalyses UDP-N-acetyl-alpha-D-muramoyl-L-alanyl-D-glutamate + meso-2,6-diaminopimelate + ATP = UDP-N-acetyl-alpha-D-muramoyl-L-alanyl-gamma-D-glutamyl-meso-2,6-diaminopimelate + ADP + phosphate + H(+). It functions in the pathway cell wall biogenesis; peptidoglycan biosynthesis. Functionally, catalyzes the addition of meso-diaminopimelic acid to the nucleotide precursor UDP-N-acetylmuramoyl-L-alanyl-D-glutamate (UMAG) in the biosynthesis of bacterial cell-wall peptidoglycan. The sequence is that of UDP-N-acetylmuramoyl-L-alanyl-D-glutamate--2,6-diaminopimelate ligase from Helicobacter hepaticus (strain ATCC 51449 / 3B1).